A 151-amino-acid chain; its full sequence is Transcriptional regulator MraZ (151 aa).

SpoVT-AbrB domains are found at residues 5–51 (AHEL…PVAE) and 81–124 (AEIL…GREQ).

It belongs to the MraZ family. In terms of assembly, forms oligomers.

It localises to the cytoplasm. Its subcellular location is the nucleoid. This is Transcriptional regulator MraZ from Neisseria meningitidis serogroup A / serotype 4A (strain DSM 15465 / Z2491).